The following is a 469-amino-acid chain: Siroheme synthase (469 aa).

The segment at 1–203 (MDYLPIFTDL…GQEQDAKQEL (203 aa)) is precorrin-2 dehydrogenase /sirohydrochlorin ferrochelatase. NAD(+)-binding positions include 22–23 (DV) and 43–44 (PV). The residue at position 128 (S128) is a Phosphoserine. Positions 214–469 (GQVALIGSGP…LQQSAVVKLA (256 aa)) are uroporphyrinogen-III C-methyltransferase. P223 serves as a coordination point for S-adenosyl-L-methionine. The active-site Proton acceptor is the D246. K268 acts as the Proton donor in catalysis. Residues 299-301 (GGD), V304, 329-330 (TA), M381, and G410 each bind S-adenosyl-L-methionine.

In the N-terminal section; belongs to the precorrin-2 dehydrogenase / sirohydrochlorin ferrochelatase family. The protein in the C-terminal section; belongs to the precorrin methyltransferase family.

It catalyses the reaction uroporphyrinogen III + 2 S-adenosyl-L-methionine = precorrin-2 + 2 S-adenosyl-L-homocysteine + H(+). The catalysed reaction is precorrin-2 + NAD(+) = sirohydrochlorin + NADH + 2 H(+). The enzyme catalyses siroheme + 2 H(+) = sirohydrochlorin + Fe(2+). Its pathway is cofactor biosynthesis; adenosylcobalamin biosynthesis; precorrin-2 from uroporphyrinogen III: step 1/1. It participates in cofactor biosynthesis; adenosylcobalamin biosynthesis; sirohydrochlorin from precorrin-2: step 1/1. The protein operates within porphyrin-containing compound metabolism; siroheme biosynthesis; precorrin-2 from uroporphyrinogen III: step 1/1. It functions in the pathway porphyrin-containing compound metabolism; siroheme biosynthesis; siroheme from sirohydrochlorin: step 1/1. Its pathway is porphyrin-containing compound metabolism; siroheme biosynthesis; sirohydrochlorin from precorrin-2: step 1/1. Its function is as follows. Multifunctional enzyme that catalyzes the SAM-dependent methylations of uroporphyrinogen III at position C-2 and C-7 to form precorrin-2 via precorrin-1. Then it catalyzes the NAD-dependent ring dehydrogenation of precorrin-2 to yield sirohydrochlorin. Finally, it catalyzes the ferrochelation of sirohydrochlorin to yield siroheme. The polypeptide is Siroheme synthase (Photobacterium profundum (strain SS9)).